A 352-amino-acid polypeptide reads, in one-letter code: Phosphoribosylformylglycinamidine cyclo-ligase (352 aa).

Belongs to the AIR synthase family.

It localises to the cytoplasm. It carries out the reaction 2-formamido-N(1)-(5-O-phospho-beta-D-ribosyl)acetamidine + ATP = 5-amino-1-(5-phospho-beta-D-ribosyl)imidazole + ADP + phosphate + H(+). It participates in purine metabolism; IMP biosynthesis via de novo pathway; 5-amino-1-(5-phospho-D-ribosyl)imidazole from N(2)-formyl-N(1)-(5-phospho-D-ribosyl)glycinamide: step 2/2. The polypeptide is Phosphoribosylformylglycinamidine cyclo-ligase (Teredinibacter turnerae (strain ATCC 39867 / T7901)).